A 554-amino-acid chain; its full sequence is (+)-delta-cadinene synthase isozyme XC1 (554 aa).

Positions 1–16 (MASQVSQMPSSSPLSS) are enriched in low complexity. Residues 1-23 (MASQVSQMPSSSPLSSNKDEMRP) form a disordered region. Residues aspartate 307, aspartate 311, aspartate 451, and glutamate 455 each coordinate Mg(2+). The DDXXD motif motif lies at 307–311 (DDTYD).

This sequence belongs to the terpene synthase family. Requires Mg(2+) as cofactor.

The enzyme catalyses (2E,6E)-farnesyl diphosphate = (1S,8aR)-delta-cadinene + diphosphate. It functions in the pathway secondary metabolite biosynthesis; terpenoid biosynthesis. In terms of biological role, responsible for the cyclization of trans,trans-farnesyl diphosphate (FPP) to (+)-delta cadinene. This Gossypium arboreum (Tree cotton) protein is (+)-delta-cadinene synthase isozyme XC1.